A 377-amino-acid chain; its full sequence is Diels-Alderase fsa2 (377 aa).

This sequence belongs to the Diels-Alderase family.

It catalyses the reaction (5S)-3-[(2E,6R,8E,10E,12E)-2,6-dimethyltetradeca-2,8,10,12-tetraenoyl]-5-(hydroxymethyl)pyrrolidine-2,4-dione = trichosetin. It participates in mycotoxin biosynthesis. Its function is as follows. Diels-Alderase; part of the gene cluster that mediates the biosynthesis of equisetin, a trans-fused decalin-containing tetramic acid with antimicrobial activity. The PKS module of eqxS together with the enoylreductase eqxC catalyze the formation of the polyketide unit which is then conjugated to L-serine by the condensation domain of the eqxS NRPS module. Activity of the Dieckmann cyclase domain (RED) results in release of the Dieckmann product intermediate. Diels-Alderase eqx3 is involved in endo-selective Diels-Alder cycloaddition to form the decalin ring, leading to the production of N-desmethylequisetin also called trichosetin. Subsequent N-methylation is carried out by eqxD to give equisetin. The polypeptide is Diels-Alderase fsa2 (Fusarium heterosporum).